Consider the following 377-residue polypeptide: Alanine racemase (377 aa).

Lys-37 serves as the catalytic Proton acceptor; specific for D-alanine. Lys-37 bears the N6-(pyridoxal phosphate)lysine mark. A substrate-binding site is contributed by Arg-135. The active-site Proton acceptor; specific for L-alanine is Tyr-271. Met-319 is a substrate binding site.

Belongs to the alanine racemase family. Pyridoxal 5'-phosphate serves as cofactor.

It catalyses the reaction L-alanine = D-alanine. The protein operates within amino-acid biosynthesis; D-alanine biosynthesis; D-alanine from L-alanine: step 1/1. Catalyzes the interconversion of L-alanine and D-alanine. May also act on other amino acids. The protein is Alanine racemase (alr) of Helicobacter pylori (strain HPAG1).